Here is a 23-residue protein sequence, read N- to C-terminus: Defensin D4 (23 aa).

This sequence belongs to the DEFL family. Group IV subfamily. Distributed in the epidermal cell layer of leaves and in the subepidermal layer region of stems. Not in roots.

It is found in the secreted. It localises to the cell wall. Functionally, antimicrobial peptide. Active against Fusarium spp., Gram-positive and Gram-negative bacterial pathogens. In Spinacia oleracea (Spinach), this protein is Defensin D4.